The sequence spans 499 residues: Probable dipeptidase B (499 aa).

C26 is an active-site residue.

It belongs to the peptidase C69 family.

The catalysed reaction is an L-aminoacyl-L-amino acid + H2O = 2 an L-alpha-amino acid. The chain is Probable dipeptidase B (pepDB) from Streptococcus pyogenes serotype M3 (strain ATCC BAA-595 / MGAS315).